Consider the following 207-residue polypeptide: Ribosomal RNA large subunit methyltransferase E (207 aa).

The S-adenosyl-L-methionine site is built by Gly-56, Trp-58, Asp-76, Asp-94, and Asp-116. Lys-156 serves as the catalytic Proton acceptor.

Belongs to the class I-like SAM-binding methyltransferase superfamily. RNA methyltransferase RlmE family.

The protein localises to the cytoplasm. It catalyses the reaction uridine(2552) in 23S rRNA + S-adenosyl-L-methionine = 2'-O-methyluridine(2552) in 23S rRNA + S-adenosyl-L-homocysteine + H(+). Its function is as follows. Specifically methylates the uridine in position 2552 of 23S rRNA at the 2'-O position of the ribose in the fully assembled 50S ribosomal subunit. The polypeptide is Ribosomal RNA large subunit methyltransferase E (Desulfatibacillum aliphaticivorans).